Consider the following 965-residue polypeptide: Collagen alpha-1(I) chain (965 aa).

Residues 1 to 21 (SVPGPMGPSGPRGLPGPPGPG) show a composition bias toward pro residues. The interval 1-965 (SVPGPMGPSG…PGPPGPPGPP (965 aa)) is disordered. 11 positions are modified to 4-hydroxyproline: proline 15, proline 18, proline 20, proline 29, proline 32, proline 35, proline 49, proline 64, proline 70, proline 79, and proline 85. The segment covering 52–66 (NGDDGEAGKPGRPGE) has biased composition (basic and acidic residues). Lysine 88 carries the post-translational modification 5-hydroxylysine; alternate. Lysine 88 carries an O-linked (Gal...) hydroxylysine; alternate glycan. Phosphoserine is present on serine 94. Positions 102 to 118 (DAGPAGPKGEPGSPGEN) are enriched in low complexity. 16 positions are modified to 4-hydroxyproline: proline 112, proline 115, proline 121, proline 130, proline 136, proline 157, proline 166, proline 169, proline 196, proline 199, proline 211, proline 217, proline 226, proline 232, proline 235, and proline 250. Residues 136-154 (PGASGPAGARGNDGATGAA) show a composition bias toward low complexity. The span at 156–168 (PPGPTGPAGPPGF) shows a compositional bias: pro residues. Low complexity predominate over residues 202–241 (AGAAGPAGNPGADGQPGAKGANGAPGIAGAPGFPGARGPS). 5-hydroxylysine is present on lysine 253. 8 positions are modified to 4-hydroxyproline: proline 259, proline 262, proline 273, proline 282, proline 297, proline 303, proline 312, and proline 318. Residues 307 to 327 (GERGGPGSRGFPGADGAGPKG) show a composition bias toward gly residues. Position 326 is a 5-hydroxylysine (lysine 326). A 4-hydroxyproline mark is found at proline 335, proline 344, proline 350, proline 356, proline 365, proline 368, proline 377, proline 386, proline 392, proline 404, proline 413, proline 422, proline 425, proline 443, proline 460, proline 466, proline 472, proline 480, proline 492, proline 501, proline 509, proline 515, and proline 524. Residues 359 to 385 (KGLTGSPGSPGPDGKTGPPGPAGQDGR) are compositionally biased toward low complexity. Positions 394–413 (ARGQAGVMGFPGPKGAAGEP) are enriched in low complexity. Residues 472–482 (PGEADLGAPGP) show a composition bias toward low complexity. Lysine 536 is modified (5-hydroxylysine). Proline 542, proline 557, and proline 563 each carry 4-hydroxyproline. The segment covering 569–583 (SGPSGPAGPTGARGA) has biased composition (low complexity). Serine 572 is modified (phosphoserine). 4-hydroxyproline is present on residues proline 584, proline 590, proline 593, proline 602, proline 608, proline 626, proline 635, and proline 644. Low complexity predominate over residues 596–623 (AGFAGPPGADGQPGAKGEPGDAGAKGDA). A compositionally biased stretch (pro residues) spans 625-637 (PPGPAGPTGPPGP). Position 647 is a 5-hydroxylysine (lysine 647). Over residues 652 to 668 (SAGPPGATGFPGAAGRV) the composition is skewed to low complexity. 4-hydroxyproline occurs at positions 656 and 662. The residue at position 670 (proline 670) is a 3-hydroxyproline. A 4-hydroxyproline mark is found at proline 671, proline 680, proline 683, proline 704, proline 713, proline 721, proline 730, proline 748, proline 757, proline 760, proline 766, proline 771, proline 777, proline 783, proline 791, and proline 797. Positions 697–706 (ETGPAGRPGE) are enriched in low complexity. A compositionally biased stretch (low complexity) spans 718-730 (KGSPGADGPAGAP). Residues 768 to 780 (KGPPGPMGPPGLA) show a composition bias toward pro residues. The residue at position 806 (lysine 806) is a 5-hydroxylysine. Positions 815–830 (SGPPGAPGAPGAPGPV) are enriched in pro residues. 4-hydroxyproline is present on residues proline 818, proline 821, and proline 824. The span at 851–865 (AGPAGARGPAGPQGP) shows a compositional bias: low complexity. Residues 866–880 (RGDKGETGEQGDRGI) are compositionally biased toward basic and acidic residues. Position 869 is a 5-hydroxylysine (lysine 869). Lysine 881 is modified (5-hydroxylysine; alternate). Lysine 881 carries O-linked (Gal...) hydroxylysine; alternate glycosylation. Proline 896, proline 899, proline 917, and proline 932 each carry 4-hydroxyproline. Positions 899–932 (PGEQGPSGASGPAGPRGPPGSAGSPGKDGLNGLP) are enriched in low complexity. At proline 937 the chain carries 3-hydroxyproline. Proline 938 carries the post-translational modification 4-hydroxyproline. Residues 950 to 965 (VGPPGPPGPPGPPGPP) are compositionally biased toward pro residues. Proline 952 is modified (3-hydroxyproline). Proline 953 bears the 4-hydroxyproline mark. The residue at position 955 (proline 955) is a 3-hydroxyproline. Position 956 is a 4-hydroxyproline (proline 956). The residue at position 958 (proline 958) is a 3-hydroxyproline. Proline 959, proline 962, and proline 965 each carry 4-hydroxyproline.

Belongs to the fibrillar collagen family. Trimers of one alpha 2(I) and two alpha 1(I) chains. In terms of processing, contains mostly 4-hydroxyproline. Proline residues at the third position of the tripeptide repeating unit (G-X-Y) are hydroxylated in some or all of the chains. Post-translationally, contains 3-hydroxyproline at a few sites. This modification occurs on the first proline residue in the sequence motif Gly-Pro-Hyp, where Hyp is 4-hydroxyproline. Lysine residues at the third position of the tripeptide repeating unit (G-X-Y) are 5-hydroxylated in some or all of the chains. In terms of processing, O-glycosylated on hydroxylated lysine residues. The O-linked glycan consists of a Glc-Gal disaccharide. Expressed in bones.

It localises to the secreted. It is found in the extracellular space. Its subcellular location is the extracellular matrix. Type I collagen is a member of group I collagen (fibrillar forming collagen). In Scelidotherium sp. (strain SLP-2019) (South American ground sloth), this protein is Collagen alpha-1(I) chain.